We begin with the raw amino-acid sequence, 34 residues long: MEVNILAFIATALFILVPTAFLLIIYVKTVSKSD.

Residues 5 to 25 (ILAFIATALFILVPTAFLLII) form a helical membrane-spanning segment.

It belongs to the PsbM family. As to quaternary structure, PSII is composed of 1 copy each of membrane proteins PsbA, PsbB, PsbC, PsbD, PsbE, PsbF, PsbH, PsbI, PsbJ, PsbK, PsbL, PsbM, PsbT, PsbX, PsbY, PsbZ, Psb30/Ycf12, at least 3 peripheral proteins of the oxygen-evolving complex and a large number of cofactors. It forms dimeric complexes.

It localises to the plastid. It is found in the chloroplast thylakoid membrane. Functionally, one of the components of the core complex of photosystem II (PSII). PSII is a light-driven water:plastoquinone oxidoreductase that uses light energy to abstract electrons from H(2)O, generating O(2) and a proton gradient subsequently used for ATP formation. It consists of a core antenna complex that captures photons, and an electron transfer chain that converts photonic excitation into a charge separation. This subunit is found at the monomer-monomer interface. In Phaseolus vulgaris (Kidney bean), this protein is Photosystem II reaction center protein M.